Reading from the N-terminus, the 488-residue chain is Probable glycine dehydrogenase (decarboxylating) subunit 2 (488 aa).

N6-(pyridoxal phosphate)lysine is present on Lys274.

The protein belongs to the GcvP family. C-terminal subunit subfamily. As to quaternary structure, the glycine cleavage system is composed of four proteins: P, T, L and H. In this organism, the P 'protein' is a heterodimer of two subunits. Pyridoxal 5'-phosphate is required as a cofactor.

It catalyses the reaction N(6)-[(R)-lipoyl]-L-lysyl-[glycine-cleavage complex H protein] + glycine + H(+) = N(6)-[(R)-S(8)-aminomethyldihydrolipoyl]-L-lysyl-[glycine-cleavage complex H protein] + CO2. In terms of biological role, the glycine cleavage system catalyzes the degradation of glycine. The P protein binds the alpha-amino group of glycine through its pyridoxal phosphate cofactor; CO(2) is released and the remaining methylamine moiety is then transferred to the lipoamide cofactor of the H protein. This Listeria welshimeri serovar 6b (strain ATCC 35897 / DSM 20650 / CCUG 15529 / CIP 8149 / NCTC 11857 / SLCC 5334 / V8) protein is Probable glycine dehydrogenase (decarboxylating) subunit 2.